Here is a 243-residue protein sequence, read N- to C-terminus: R-spondin-2 (243 aa).

An N-terminal signal peptide occupies residues 1 to 21 (MQFRLFSFALIILNCMDYSHC). Cystine bridges form between C40/C46, C43/C52, C55/C74, C78/C93, C96/C104, C101/C110, C113/C124, C128/C141, C145/C187, C156/C163, and C196/C203. The stretch at 90–134 (MNRCARCRIENCDSCFSKDFCTKCKVGFYLHRGRCFDECPDGFAP) is one FU repeat. One can recognise a TSP type-1 domain in the interval 144–204 (GCEVGHWSEW…RCKMTMRHCP (61 aa)). Residue N160 is glycosylated (N-linked (GlcNAc...) asparagine). The segment covering 204 to 224 (PGGKRTPKAKEKRNKKKKRKL) has biased composition (basic residues). The tract at residues 204-243 (PGGKRTPKAKEKRNKKKKRKLIERAQEQHSVFLATDRANQ) is disordered.

This sequence belongs to the R-spondin family. Interacts with WNT1. Binds heparin. Interacts with LGR4, LGR5 and LGR6. Interacts with E3 ubiquitin ligases RNF43 and ZNRF3.

The protein localises to the secreted. Functionally, activator of the canonical Wnt signaling pathway by acting as a ligand for LGR4-6 receptors. Upon binding to LGR4-6 (LGR4, LGR5 or LGR6), LGR4-6 associate with phosphorylated LRP6 and frizzled receptors that are activated by extracellular Wnt receptors, triggering the canonical Wnt signaling pathway to increase expression of target genes. Also regulates the canonical Wnt/beta-catenin-dependent pathway and non-canonical Wnt signaling by acting as an inhibitor of ZNRF3, an important regulator of the Wnt signaling pathway. During embryonic development, plays a crucial role in limb specification, amplifying the Wnt signaling pathway independently of LGR4-6 receptors, possibly by acting as a direct antagonistic ligand to RNF43 and ZNRF3, hence governing the number of limbs an embryo should form. The chain is R-spondin-2 (RSPO2) from Homo sapiens (Human).